The sequence spans 209 residues: Ribosomal RNA large subunit methyltransferase E (209 aa).

The S-adenosyl-L-methionine site is built by Gly-63, Trp-65, Asp-83, Asp-99, and Asp-124. Lys-164 (proton acceptor) is an active-site residue.

It belongs to the class I-like SAM-binding methyltransferase superfamily. RNA methyltransferase RlmE family.

The protein resides in the cytoplasm. The enzyme catalyses uridine(2552) in 23S rRNA + S-adenosyl-L-methionine = 2'-O-methyluridine(2552) in 23S rRNA + S-adenosyl-L-homocysteine + H(+). Specifically methylates the uridine in position 2552 of 23S rRNA at the 2'-O position of the ribose in the fully assembled 50S ribosomal subunit. The chain is Ribosomal RNA large subunit methyltransferase E from Pectobacterium atrosepticum (strain SCRI 1043 / ATCC BAA-672) (Erwinia carotovora subsp. atroseptica).